The sequence spans 204 residues: Rho GDP-dissociation inhibitor 1 (204 aa).

The segment at 1 to 36 (MAEQEPTAEQLAQIAAENEEDEHSVNYKPPAQKSIQ) is disordered. A2 bears the N-acetylalanine mark. At S34 the chain carries Phosphoserine. Residue K43 is modified to N6-acetyllysine. S47 carries the post-translational modification Phosphoserine. A hydrophobic region spans residues 66 to 83 (NVPNVVVTRLTLVCSTAP). S101 bears the Phosphoserine; by PKA mark. K105 is modified (N6-acetyllysine). The residue at position 115 (S115) is a Phosphoserine; by PKC. An N6-acetyllysine modification is found at K127. Glycyl lysine isopeptide (Lys-Gly) (interchain with G-Cter in SUMO1); alternate cross-links involve residues K138 and K141. Glycyl lysine isopeptide (Lys-Gly) (interchain with G-Cter in SUMO2); alternate cross-links involve residues K138 and K141. At K141 the chain carries N6-acetyllysine; alternate. Residue K141 is modified to N6-succinyllysine; alternate. K178 carries the N6-acetyllysine modification.

This sequence belongs to the Rho GDI family. Monomer. Interacts with FER. Interacts with PLXNB3. Forms a heterodimer with RAC1. Interacts with RHOA, the affinity is increased by three orders of magnitude when RHOA is prenylated. Interacts with PSMD10; the interaction increases ARHGDIA association with RHOA, leading to ARHGDIA-mediated inactivation of RHOA and ROCK and prolonged AKT activation. Interacts with KANK2; the interaction is direct and may regulate the interaction of ARHGDIA with RHOA, RAC1 and CDC42. Interacts with RHOC. Interacts with CDC42. Interacts with NGFR (via death domain); NGFR binding decreases the affinity for RHOA. As to expression, brain, lung, thymus, spleen, small intestine, and kidney, and weakly in heart and liver.

Its subcellular location is the cytoplasm. Functionally, controls Rho proteins homeostasis. Regulates the GDP/GTP exchange reaction of the Rho proteins by inhibiting the dissociation of GDP from them, and the subsequent binding of GTP to them. Retains Rho proteins such as CDC42, RAC1 and RHOA in an inactive cytosolic pool, regulating their stability and protecting them from degradation. Actively involved in the recycling and distribution of activated Rho GTPases in the cell, mediates extraction from membranes of both inactive and activated molecules due its exceptionally high affinity for prenylated forms. Through the modulation of Rho proteins, may play a role in cell motility regulation. In glioma cells, inhibits cell migration and invasion by mediating the signals of SEMA5A and PLXNB3 that lead to inactivation of RAC1. This Bos taurus (Bovine) protein is Rho GDP-dissociation inhibitor 1 (ARHGDIA).